A 618-amino-acid polypeptide reads, in one-letter code: Very-long-chain aldehyde decarbonylase GL1-3 (618 aa).

The next 7 helical transmembrane spans lie at Leu9–Val29, Thr46–Phe66, Met91–Thr111, Gly121–His141, Leu174–Gly194, Asp289–Phe309, and Leu315–Leu335. One can recognise a Fatty acid hydroxylase domain in the interval Val127 to Thr267.

The protein belongs to the sterol desaturase family. In terms of assembly, homodimer. Expressed in germinating seeds and stamens.

It is found in the endoplasmic reticulum membrane. The catalysed reaction is a long-chain fatty aldehyde + 2 NADPH + O2 + H(+) = a long-chain alkane + formate + 2 NADP(+) + H2O. Aldehyde decarbonylase involved in the conversion of aldehydes to alkanes. Core component of a very-long-chain alkane synthesis complex. This is Very-long-chain aldehyde decarbonylase GL1-3 from Oryza sativa subsp. japonica (Rice).